We begin with the raw amino-acid sequence, 335 residues long: Dihydroorotate dehydrogenase (quinone) (335 aa).

FMN contacts are provided by residues 59-63 (AGLDK) and threonine 83. Lysine 63 provides a ligand contact to substrate. Position 108-112 (108-112 (NRMGF)) interacts with substrate. Residues asparagine 136 and asparagine 169 each contribute to the FMN site. Asparagine 169 contacts substrate. Serine 172 functions as the Nucleophile in the catalytic mechanism. Asparagine 174 is a binding site for substrate. Residues lysine 214 and threonine 242 each contribute to the FMN site. Residue 243–244 (NT) participates in substrate binding. FMN is bound by residues glycine 265, glycine 294, and 315–316 (YS).

This sequence belongs to the dihydroorotate dehydrogenase family. Type 2 subfamily. Monomer. FMN serves as cofactor.

It localises to the cell membrane. It catalyses the reaction (S)-dihydroorotate + a quinone = orotate + a quinol. Its pathway is pyrimidine metabolism; UMP biosynthesis via de novo pathway; orotate from (S)-dihydroorotate (quinone route): step 1/1. Its function is as follows. Catalyzes the conversion of dihydroorotate to orotate with quinone as electron acceptor. This is Dihydroorotate dehydrogenase (quinone) from Neisseria meningitidis serogroup B (strain ATCC BAA-335 / MC58).